Consider the following 216-residue polypeptide: Adenylate kinase (216 aa).

10–15 (GAGKGT) is a binding site for ATP. An NMP region spans residues 30–59 (STGDIFRANIKEKTPLGIEAKRYIDNGQLV). Residues T31, R36, 57 to 59 (QLV), 85 to 88 (GFPR), and Q92 each bind AMP. Positions 126 to 163 (GRRVCTSCGASYHIRFNPPKIEGKCDICDNELIQRKDD) are LID. R127 serves as a coordination point for ATP. Positions 130 and 133 each coordinate Zn(2+). An ATP-binding site is contributed by 136 to 137 (SY). Residues C150 and C153 each contribute to the Zn(2+) site. Residues R160 and R171 each contribute to the AMP site. Residue E199 participates in ATP binding.

Belongs to the adenylate kinase family. As to quaternary structure, monomer.

The protein localises to the cytoplasm. The enzyme catalyses AMP + ATP = 2 ADP. Its pathway is purine metabolism; AMP biosynthesis via salvage pathway; AMP from ADP: step 1/1. In terms of biological role, catalyzes the reversible transfer of the terminal phosphate group between ATP and AMP. Plays an important role in cellular energy homeostasis and in adenine nucleotide metabolism. The protein is Adenylate kinase of Clostridium botulinum (strain Langeland / NCTC 10281 / Type F).